Reading from the N-terminus, the 238-residue chain is Probable transcriptional regulatory protein SAB0618 (238 aa).

It belongs to the TACO1 family. YeeN subfamily.

It localises to the cytoplasm. This Staphylococcus aureus (strain bovine RF122 / ET3-1) protein is Probable transcriptional regulatory protein SAB0618.